Here is a 113-residue protein sequence, read N- to C-terminus: Protein ZEO1 (113 aa).

Residues 1–16 (MSEIQNKAETAAQDVQ) are compositionally biased toward polar residues. The segment at 1–96 (MSEIQNKAET…AVSEKKETKK (96 aa)) is disordered. N-acetylserine is present on Ser2. Ser2 is modified (phosphoserine). Residues 2-97 (SEIQNKAETA…VSEKKETKKE (96 aa)) adopt a coiled-coil conformation. The span at 17–37 (QKLEETKESLQNKGQEVKEQA) shows a compositional bias: basic and acidic residues. Glycyl lysine isopeptide (Lys-Gly) (interchain with G-Cter in ubiquitin) cross-links involve residues Lys18 and Lys23. Ser25 is subject to Phosphoserine. Residues Lys29 and Lys34 each participate in a glycyl lysine isopeptide (Lys-Gly) (interchain with G-Cter in ubiquitin) cross-link. Ser40 is modified (phosphoserine). A Glycyl lysine isopeptide (Lys-Gly) (interchain with G-Cter in ubiquitin) cross-link involves residue Lys45. Residue Thr49 is modified to Phosphothreonine. Over residues 53–82 (EQVKKEEQNIADGVEQKKTEAANKVEETKK) the composition is skewed to basic and acidic residues. Residues Lys57 and Lys82 each participate in a glycyl lysine isopeptide (Lys-Gly) (interchain with G-Cter in ubiquitin) cross-link.

In terms of assembly, interacts with MID2. In terms of processing, phosphorylation of Ser-25 is induced 2-fold in response to mating pheromone.

The protein localises to the cell membrane. Functionally, acts antagonistically to MID2 in signaling cell wall stress to the PKC1-MPK1 cell integrity pathway. This Saccharomyces cerevisiae (strain ATCC 204508 / S288c) (Baker's yeast) protein is Protein ZEO1 (ZEO1).